The sequence spans 1120 residues: Mechanosensitive channel MscK (1120 aa).

The N-terminal stretch at 1 to 33 is a signal peptide; sequence MTMFQYYKRSRHFVFSAFIAFVFVLLCQNTAFA. At 34–499 the chain is on the periplasmic side; it reads RASSNGDLPT…MKITVNWQKA (466 aa). Coiled-coil stretches lie at residues 43–98, 126–266, and 360–422; these read TKAD…VAEA, STLS…TLTE, and DELE…RREL. The helical transmembrane segment at 500 to 520 threads the bilayer; that stretch reads WPAVFIAFLAGLPLLLIAGLI. Topologically, residues 521 to 560 are cytoplasmic; sequence HWRLGWLKAYQQKLASAVGSLRNDSQLNTPKAILIDLIRA. A helical membrane pass occupies residues 561–581; the sequence is LPVCLIILAVGLILLTMQLNI. Position 582 (serine 582) is a topological domain, periplasmic. A helical membrane pass occupies residues 583 to 603; sequence ELLWSFSKKLAIFWLVFGLCW. The Cytoplasmic segment spans residues 604-634; it reads KVLEKNGVAVRHFGMPEQQTSHWRRQIVRIS. Residues 635–655 traverse the membrane as a helical segment; that stretch reads LALLPIHFWSVVAELSPLHLM. The Periplasmic segment spans residues 656-657; sequence DD. Residues 658 to 678 form a helical membrane-spanning segment; that stretch reads VLGQAMIFFNLLLIAFLVWPM. The Cytoplasmic portion of the chain corresponds to 679 to 692; it reads CRESWRDKESHTMR. Residues 693–713 form a helical membrane-spanning segment; sequence LVTITVLSIIPIALMVLTATG. The Periplasmic segment spans residues 714 to 728; that stretch reads YFYTTLRLAGRWIET. The chain crosses the membrane as a helical span at residues 729-749; sequence VYLVIIWNLLYQTVLRGLSVA. The Cytoplasmic segment spans residues 750–796; the sequence is ARRIAWRRALARRQNLVKEGAEGAEPPEEPTIALEQVNQQTLRITML. Residues 797-817 traverse the membrane as a helical segment; the sequence is LMFALFGVMFWAIWSDLITVF. Topologically, residues 818–839 are periplasmic; sequence SYLDSITLWHYNGTEAGAAVVK. The chain crosses the membrane as a helical span at residues 840-860; it reads NVTMGSLLFAIIASMVAWALI. At 861 to 886 the chain is on the cytoplasmic side; the sequence is RNLPGLLEVLVLSRLNMRQGASYAIT. The chain crosses the membrane as a helical span at residues 887–907; it reads TILNYIIIAVGAMTVFGSLGV. Over 908-921 the chain is Periplasmic; it reads SWDKLQWLAAALSV. Residues 922–942 form a helical membrane-spanning segment; sequence GLGFGLQEIFGNFVSGLIILF. Residues 943 to 1120 lie on the Cytoplasmic side of the membrane; it reads ERPVRIGDTV…KGDDPTPAVG (178 aa). A coiled-coil region spans residues 1057–1081; sequence YVRELRDRSRTVDELNRTIDQLCRE.

The protein belongs to the MscS (TC 1.A.23) family.

It is found in the cell inner membrane. Its function is as follows. Mechanosensitive channel that opens in response to membrane tension and specific ionic conditions. Requires high concentrations of external K(+), NH(4)(+), Rb(+) or Cs(+) to gate. May participate in the regulation of osmotic pressure changes within the cell, although it does not appear to have a major role in osmolarity regulation. Forms an ion channel of 1.0 nanosiemens conductance. The channel can remain active for between 30 seconds and over 3 minutes; it does not desensitize upon extended pressure. Its activity is masked in wild-type cells by the MscS channel. The polypeptide is Mechanosensitive channel MscK (mscK) (Escherichia coli (strain K12)).